We begin with the raw amino-acid sequence, 102 residues long: Protein translation factor SUI1 homolog (102 aa).

This sequence belongs to the SUI1 family.

The chain is Protein translation factor SUI1 homolog from Methanococcus maripaludis (strain C5 / ATCC BAA-1333).